Reading from the N-terminus, the 591-residue chain is Mono(ADP-ribosyl)transferase SpvB (591 aa).

Residues 373-576 enclose the TR mART core domain; sequence PMMGGNSSRP…LRLSDDATAD (204 aa). NAD(+) is bound by residues Arg-414 and 471-477; that span reads RGLKLDK. Active-site residues include Arg-471, Ser-501, and Glu-538. Glu-538 contributes to the NAD(+) binding site.

This sequence belongs to the SpvB family.

Its subcellular location is the secreted. The catalysed reaction is L-arginyl-[protein] + NAD(+) = N(omega)-(ADP-D-ribosyl)-L-arginyl-[protein] + nicotinamide + H(+). Inhibited by novobiocin. Functionally, mono-ADP-ribosylates eukaryotic muscle and non-muscle actin on 'Arg-177'. ADP-ribosylates all actins tested, has more activity on nonmuscle beta/gamma-actin than on muscle alpha-actin. Prefers monomeric G-actin but can weakly ADP-ribosylate F-actin. ADP-ribosylation prevents the polymerization of G-actin to F-actin, causing actin filament depolymerization, destruction of the cytoskeleton and cytotoxicity. Does not possess NAD(+)-glycohydrolase activity, unlike most mART enzymes. This is Mono(ADP-ribosyl)transferase SpvB (spvB) from Salmonella typhimurium.